We begin with the raw amino-acid sequence, 66 residues long: Conotoxin Cl14.1a (66 aa).

An N-terminal signal peptide occupies residues 1 to 19 (MNVTAMFIVLLLTMPLTDG). The propeptide occupies 20–49 (FNIRAINGGELFGLVQRDAGNALDHGFYRR).

Belongs to the conotoxin L superfamily. In terms of processing, contains 2 disulfide bonds. In terms of tissue distribution, expressed by the venom duct.

The protein resides in the secreted. Its function is as follows. Probable neurotoxin with unknown target. Possibly targets ion channels. This peptide could be considered as an apoptosis activator in some cancers (tested on lung and breast cancer cell lines). Provokes the decrease of H1299 lung cancer cells viability after 24 hours treatment, and induces a high Bax/Bcl-2 ratio, which suggests that this peptide can activate apoptosis in H1299 cells. In addition, H1299 and H1437 lung cancer cell lines treated with this peptide have decreased cell viability, activated caspases, and reduced expression of the pro-survival protein NF-kappa-B (NFKB1), indicating activation of apoptosis. In synergy with MicroRNA-101-3p, this synthetic peptide inhibits breast cancer cells (SK-BR-3 and MCF-7) migration, invasion, and proliferation through suppressing the expression of the methyltransferase EZH2. In parallel, this synergy treatment is able to promote the apoptosis of breast cancer cells. Against microbes, this synthetic toxin (at micromolar concentrations) lowers viability and inhibits host cell invasion by the opportunistic parasite Toxoplasma gondii (tachyzoite form). In addition, it permits T.gondii intracellular replication to decrease while viability of the host cell is unaffected. This chain is Conotoxin Cl14.1a, found in Californiconus californicus (California cone).